Here is a 182-residue protein sequence, read N- to C-terminus: Peptidyl-prolyl cis-trans isomerase H (182 aa).

One can recognise a PPIase cyclophilin-type domain in the interval 15–181; it reads FFDITIGGEP…LDVVISQCGE (167 aa).

It belongs to the cyclophilin-type PPIase family. PPIase H subfamily.

It localises to the nucleus. It carries out the reaction [protein]-peptidylproline (omega=180) = [protein]-peptidylproline (omega=0). In terms of biological role, PPIases accelerate the folding of proteins. It catalyzes the cis-trans isomerization of proline imidic peptide bonds in oligopeptides. This Gibberella zeae (strain ATCC MYA-4620 / CBS 123657 / FGSC 9075 / NRRL 31084 / PH-1) (Wheat head blight fungus) protein is Peptidyl-prolyl cis-trans isomerase H (CYP3).